We begin with the raw amino-acid sequence, 25 residues long: ATP-dependent 6-phosphofructokinase 2 (25 aa).

Position 11 (glycine 11) interacts with ATP.

The protein belongs to the phosphofructokinase type A (PFKA) family. ATP-dependent PFK group I subfamily. Prokaryotic clade 'B1' sub-subfamily. In terms of assembly, homotetramer. Requires Mg(2+) as cofactor.

It localises to the cytoplasm. The catalysed reaction is beta-D-fructose 6-phosphate + ATP = beta-D-fructose 1,6-bisphosphate + ADP + H(+). The protein operates within carbohydrate degradation; glycolysis; D-glyceraldehyde 3-phosphate and glycerone phosphate from D-glucose: step 3/4. Its activity is regulated as follows. In contrast with PFK1 this enzyme is not affected by phosphoenolpyruvate. In terms of biological role, catalyzes the phosphorylation of D-fructose 6-phosphate to fructose 1,6-bisphosphate by ATP, the first committing step of glycolysis. The sequence is that of ATP-dependent 6-phosphofructokinase 2 (pfkA2) from Thermus thermophilus (strain ATCC 27634 / DSM 579 / HB8).